The sequence spans 219 residues: Urease subunit gamma/beta (219 aa).

The urease gamma stretch occupies residues methionine 1–serine 101. The urease beta stretch occupies residues serine 102 to alanine 219.

The protein in the N-terminal section; belongs to the urease gamma subunit family. In the C-terminal section; belongs to the urease beta subunit family. Heterohexamer of 3 UreC (alpha) and 3 UreAB (gamma/beta) subunits.

It is found in the cytoplasm. The enzyme catalyses urea + 2 H2O + H(+) = hydrogencarbonate + 2 NH4(+). It participates in nitrogen metabolism; urea degradation; CO(2) and NH(3) from urea (urease route): step 1/1. In Sulfurisphaera tokodaii (strain DSM 16993 / JCM 10545 / NBRC 100140 / 7) (Sulfolobus tokodaii), this protein is Urease subunit gamma/beta.